Consider the following 579-residue polypeptide: Extracellular serine/threonine protein kinase FAM20C (579 aa).

Over 1–10 (MKMILVRRFR) the chain is Cytoplasmic. Residues 1-87 (MKMILVRRFR…PNKHTLRILQ (87 aa)) constitute a propeptide that is removed on maturation. The chain crosses the membrane as a helical; Signal-anchor for type II membrane protein span at residues 11 to 31 (VLILVVFLLACALHIAVDLLP). The Lumenal portion of the chain corresponds to 32-579 (KLDRRATRSS…ATEHRASTER (548 aa)). The disordered stretch occupies residues 38-79 (TRSSGEPGCSCAQPAAEAAGPGWAQARSRPGESAGGDAGWPN). The span at 49–63 (AQPAAEAAGPGWAQA) shows a compositional bias: low complexity. Asparagine 96 carries N-linked (GlcNAc...) asparagine glycosylation. A disordered region spans residues 104–155 (KLPSAAEPVDHAPRGQEPRSPPPRDPAHRPLLRDPGPRPRVPPPGPSGDGSL). 2 stretches are compositionally biased toward basic and acidic residues: residues 111-120 (PVDHAPRGQE) and 128-140 (DPAH…DPGP). 3 residues coordinate ATP: glutamine 264, lysine 280, and glutamate 301. Glutamate 301 contributes to the Mn(2+) binding site. The segment at 349 to 560 (FVSPANNICF…AVRDCVEKDG (212 aa)) is kinase domain. 2 disulfides stabilise this stretch: cysteine 357–cysteine 373 and cysteine 362–cysteine 366. 384-387 (AAFL) provides a ligand contact to ATP. 2 cysteine pairs are disulfide-bonded: cysteine 421–cysteine 495 and cysteine 496–cysteine 555. Aspartate 453 is a catalytic residue. Positions 458 and 473 each coordinate ATP. Aspartate 473 lines the Mn(2+) pocket.

This sequence belongs to the FAM20 family. In terms of assembly, homodimer; disulfide-linked. Interacts with FAM20A; probably forming a heterotetramer of 2 subunits of FAM20A and 2 subunits of FAM20C. Interacts with COPII components SEC23A and SEC24A; transport of FAM20C from the endoplasmic reticulum to the Golgi is likely to be mediated by COPII vesicles. The cofactor is Mn(2+). In terms of processing, N-glycosylation is required for folding. Post-translationally, autophosphorylated. Propeptide cleavage by MBTPS1/S1P promotes FAM20C secretion and maximal kinase activity which is essential for efficient osteoblast differentiation and biomineralization. As to expression, in the mammary gland, expressed at higher levels in lactating mice than in virgin mice (at protein level). Highly expressed in the tooth. No expression in the dental pulp. At the secretory stage of amelogenesis, it is detected in the matrix of the enamel, in the ameloblasts, and within the cells adjoining the stratum intermedium (a tissue layer analogous to the stellate reticulum seen in the developing molar). Strong expression is observed in maturation stage ameloblasts and throughout the non-cornified layers of the gingival epithelium. Expressed at moderate levels in bone and at low levels in kidney, liver, brain and lung. Very low expression, if any, in spleen and skeletal muscle.

It localises to the golgi apparatus membrane. Its subcellular location is the secreted. It is found in the endoplasmic reticulum. The enzyme catalyses L-seryl-[protein] + ATP = O-phospho-L-seryl-[protein] + ADP + H(+). It catalyses the reaction L-threonyl-[protein] + ATP = O-phospho-L-threonyl-[protein] + ADP + H(+). With respect to regulation, serine/threonine protein kinase activity is increased upon interaction with FAM20A. Golgi serine/threonine protein kinase that phosphorylates secretory pathway proteins within Ser-x-Glu/pSer motifs and plays a key role in biomineralization of bones and teeth. Constitutes the main protein kinase for extracellular proteins, generating the majority of the extracellular phosphoproteome. Mainly phosphorylates proteins within the Ser-x-Glu/pSer motif, but also displays a broader substrate specificity. Phosphorylates ERO1A, enhancing its activity which is required to maintain endoplasmic reticulum redox homeostasis and for oxidative protein folding. During endoplasmic reticulum stress, phosphorylates P4HB/PDIA1 which induces a functional switch, causing P4HB to change from an oxidoreductase to a molecular chaperone. This is critical to maintain ER proteostasis and reduce cell death under ER stress. Phosphorylation of P4HB also promotes its interaction with ERN1, leading to reduced activity of ERN1, a key sensor for the endoplasmic reticulum unfolded protein response. Required for osteoblast differentiation and mineralization. Phosphorylates casein as well as a number of proteins involved in biomineralization such as AMELX, AMTN, ENAM and SPP1. In addition to its role in biomineralization, also plays a role in lipid homeostasis, wound healing and cell migration and adhesion. This is Extracellular serine/threonine protein kinase FAM20C from Mus musculus (Mouse).